The sequence spans 520 residues: GMP synthase [glutamine-hydrolyzing] (520 aa).

Residues 12-202 form the Glutamine amidotransferase type-1 domain; that stretch reads KIIVLDFGSQ…AFDVCGCTGD (191 aa). The active-site Nucleophile is C89. Residues H176 and E178 contribute to the active site. Residues 203-395 form the GMPS ATP-PPase domain; the sequence is WSMENFIDME…LGMPDAIVWR (193 aa). 230–236 contacts ATP; that stretch reads SGGVDSS.

In terms of assembly, homodimer.

It carries out the reaction XMP + L-glutamine + ATP + H2O = GMP + L-glutamate + AMP + diphosphate + 2 H(+). The protein operates within purine metabolism; GMP biosynthesis; GMP from XMP (L-Gln route): step 1/1. Its function is as follows. Catalyzes the synthesis of GMP from XMP. In Enterococcus faecalis (strain ATCC 700802 / V583), this protein is GMP synthase [glutamine-hydrolyzing].